The chain runs to 433 residues: SPI-2 type 3 secretion system ATPase (433 aa).

165–170 (GVGKST) serves as a coordination point for ATP.

Belongs to the ATPase alpha/beta chains family. T3SS ATPase subfamily. As to quaternary structure, the core secretion machinery of the T3SS is composed of approximately 20 different proteins, including cytoplasmic components, a base, an export apparatus and a needle. This subunit is part of the cytosolic complex. Forms homohexamers. Forms a complex with SsaK/SctL (stator protein) and SsaQ/SctQ (the major sorting platform component). Interacts with the T3SS-2 specific chaperones SsaE, SseA, SscA, SscB, and SrcA.

The protein resides in the cytoplasm. The catalysed reaction is ATP + H2O + cellular proteinSide 1 = ADP + phosphate + cellular proteinSide 2.. In terms of biological role, ATPase component of the type III secretion system (T3SS), also called injectisome, which is used to inject bacterial effector proteins into eukaryotic host cells. Acts as a molecular motor to provide the energy that is required for the export of proteins. Required for type III secretion apparatus (T3SA) formation, secretion of a subset of SPI-2 effectors and virulence. May play a critical role in T3SS substrate recognition, disassembly of the effector/chaperone complex and unfolding of the effector in an ATP-dependent manner prior to secretion. Releases the effector protein SseB from the T3SS-2 specific chaperone SsaE in an ATP-dependent manner. This is SPI-2 type 3 secretion system ATPase from Salmonella typhimurium (strain LT2 / SGSC1412 / ATCC 700720).